A 485-amino-acid chain; its full sequence is MTTLMVQGTTSDAGKSTLVTALCRWLARQGVAVAPFKPQNMALNSAVTADGGEIGRAQAVQAQACGLAPHTDMNPVLLKPDSDTGAQVIVHGRAVACMDAAAYHDYKRVAREAVLASHRRLAERYRVVMVEGAGSPAEINLRANDIANMGFAEAVDCPVILVADIDKGGVFAHLVGTLALLSASEQARVEGFVINRFRGDIALLEPGLDWLETHTGKPVLGVLPYLHDLHLEAEDAIDDRQPAKTGERLKVAVAVPPRISNHTDFDPLRLHPQVDLVFVGPGQRIPPADLIVLPGSKSVRSDLAFLREQGWEAAIRRHLRYGGKLLGICGGLQMLGGRIADPLGLEGAPGESRGLGLLDIDTVLEAEKQLRNVRGRLALEGAPVSGYEIHAGVSRGAGLDRPALGLDDGRCDGALSEDGQVLGTYLHGLFESPAACDALLRWAGLREVASPDYHALRERDIERLADLVEAHLDGARLRALCGLSG.

The 188-residue stretch at 248-435 (RLKVAVAVPP…LHGLFESPAA (188 aa)) folds into the GATase cobBQ-type domain. Cys329 functions as the Nucleophile in the catalytic mechanism. His427 is an active-site residue.

The protein belongs to the CobB/CobQ family. CobQ subfamily.

It participates in cofactor biosynthesis; adenosylcobalamin biosynthesis. Functionally, catalyzes amidations at positions B, D, E, and G on adenosylcobyrinic A,C-diamide. NH(2) groups are provided by glutamine, and one molecule of ATP is hydrogenolyzed for each amidation. The chain is Cobyric acid synthase from Azotobacter vinelandii (strain DJ / ATCC BAA-1303).